The following is a 228-amino-acid chain: Cytochrome c oxidase subunit 2 (228 aa).

Topologically, residues Met-1–His-26 are mitochondrial intermembrane. The chain crosses the membrane as a helical span at residues Thr-27–Asn-48. The Mitochondrial matrix segment spans residues Lys-49–Glu-62. Residues Ile-63–Arg-82 traverse the membrane as a helical segment. Over Leu-83 to Asn-228 the chain is Mitochondrial intermembrane. Residues His-161, Cys-196, Glu-198, Cys-200, His-204, and Met-207 each coordinate Cu cation. Glu-198 provides a ligand contact to Mg(2+).

The protein belongs to the cytochrome c oxidase subunit 2 family. In terms of assembly, component of the cytochrome c oxidase (complex IV, CIV), a multisubunit enzyme composed of a catalytic core of 3 subunits and several supernumerary subunits. The complex exists as a monomer or a dimer and forms supercomplexes (SCs) in the inner mitochondrial membrane with ubiquinol-cytochrome c oxidoreductase (cytochrome b-c1 complex, complex III, CIII). Requires Cu cation as cofactor.

The protein localises to the mitochondrion inner membrane. It carries out the reaction 4 Fe(II)-[cytochrome c] + O2 + 8 H(+)(in) = 4 Fe(III)-[cytochrome c] + 2 H2O + 4 H(+)(out). Component of the cytochrome c oxidase, the last enzyme in the mitochondrial electron transport chain which drives oxidative phosphorylation. The respiratory chain contains 3 multisubunit complexes succinate dehydrogenase (complex II, CII), ubiquinol-cytochrome c oxidoreductase (cytochrome b-c1 complex, complex III, CIII) and cytochrome c oxidase (complex IV, CIV), that cooperate to transfer electrons derived from NADH and succinate to molecular oxygen, creating an electrochemical gradient over the inner membrane that drives transmembrane transport and the ATP synthase. Cytochrome c oxidase is the component of the respiratory chain that catalyzes the reduction of oxygen to water. Electrons originating from reduced cytochrome c in the intermembrane space (IMS) are transferred via the dinuclear copper A center (CU(A)) of subunit 2 and heme A of subunit 1 to the active site in subunit 1, a binuclear center (BNC) formed by heme A3 and copper B (CU(B)). The BNC reduces molecular oxygen to 2 water molecules using 4 electrons from cytochrome c in the IMS and 4 protons from the mitochondrial matrix. The sequence is that of Cytochrome c oxidase subunit 2 (COII) from Anopheles gambiae (African malaria mosquito).